Reading from the N-terminus, the 405-residue chain is MKKVIKKIALAYSGGLDTSIMIPWLKEHYEHAEVIAVICDLGQQEDLDAIKNKALKSGASKAYVVDVKNEFAIQYLWPLVKSGALYEDQYILGTISRPLIAQKLVEIALTEEVNAVAHGATGKGNDQVRFEYSIKALAPQLEIIAPWRTWDIKSRQEAIVYAKAHGIEVPVTPKAPYSRDHNIWYISHEGGVLEDPSQEMPDDVLLMTAPVSQTPDEEEVVVLDFKKGVPVALNGQELSPVDLLNSLNQKAGQHGIGVADIVENRLVGMKIRGIYEAPAAAVLYKAHKLLESLCLTRSTLHLKQSLQQTYANLVYEGRWFSQTKQALDAFIDVTQQHVTGCVKLKLFKGNIIPAGMHSPYSLHHPELATFEEDNVYNQKDAEGFINLFSLSAKIYSQVHQGGNYD.

An ATP-binding site is contributed by 11-19 (AYSGGLDTS). Y90 contacts L-citrulline. Residue G119 coordinates ATP. L-aspartate contacts are provided by T121, N125, and D126. An L-citrulline-binding site is contributed by N125. R129, S178, S187, E263, and Y275 together coordinate L-citrulline.

This sequence belongs to the argininosuccinate synthase family. Type 1 subfamily. In terms of assembly, homotetramer.

Its subcellular location is the cytoplasm. The catalysed reaction is L-citrulline + L-aspartate + ATP = 2-(N(omega)-L-arginino)succinate + AMP + diphosphate + H(+). The protein operates within amino-acid biosynthesis; L-arginine biosynthesis; L-arginine from L-ornithine and carbamoyl phosphate: step 2/3. This is Argininosuccinate synthase from Legionella pneumophila (strain Paris).